The following is a 168-amino-acid chain: Signal peptidase I V (168 aa).

Residues 1-6 are Cytoplasmic-facing; the sequence is MKKRFW. Residues 7 to 26 form a helical membrane-spanning segment; sequence FLAGVVSVVLAIQVKNAVFI. Residues 27-168 lie on the Extracellular side of the membrane; it reads DYKVEGVSMN…NIVGVISDAE (142 aa). Catalysis depends on residues Ser-34 and Lys-75.

It belongs to the peptidase S26 family.

It localises to the cell membrane. The enzyme catalyses Cleavage of hydrophobic, N-terminal signal or leader sequences from secreted and periplasmic proteins.. In Bacillus subtilis (strain 168), this protein is Signal peptidase I V (sipV).